Consider the following 355-residue polypeptide: 3-dehydroquinate synthase (355 aa).

NAD(+) is bound by residues E71 to K76, G105 to D109, T129 to S130, K142, and K151. Residues E184, H246, and H263 each coordinate Zn(2+).

It belongs to the sugar phosphate cyclases superfamily. Dehydroquinate synthase family. Co(2+) is required as a cofactor. Zn(2+) serves as cofactor. It depends on NAD(+) as a cofactor.

It is found in the cytoplasm. The enzyme catalyses 7-phospho-2-dehydro-3-deoxy-D-arabino-heptonate = 3-dehydroquinate + phosphate. It functions in the pathway metabolic intermediate biosynthesis; chorismate biosynthesis; chorismate from D-erythrose 4-phosphate and phosphoenolpyruvate: step 2/7. Catalyzes the conversion of 3-deoxy-D-arabino-heptulosonate 7-phosphate (DAHP) to dehydroquinate (DHQ). This is 3-dehydroquinate synthase from Streptococcus pneumoniae (strain 70585).